Here is a 245-residue protein sequence, read N- to C-terminus: 3-deoxy-manno-octulosonate cytidylyltransferase (245 aa).

It belongs to the KdsB family.

It localises to the cytoplasm. The enzyme catalyses 3-deoxy-alpha-D-manno-oct-2-ulosonate + CTP = CMP-3-deoxy-beta-D-manno-octulosonate + diphosphate. It participates in nucleotide-sugar biosynthesis; CMP-3-deoxy-D-manno-octulosonate biosynthesis; CMP-3-deoxy-D-manno-octulosonate from 3-deoxy-D-manno-octulosonate and CTP: step 1/1. Its pathway is bacterial outer membrane biogenesis; lipopolysaccharide biosynthesis. Activates KDO (a required 8-carbon sugar) for incorporation into bacterial lipopolysaccharide in Gram-negative bacteria. This chain is 3-deoxy-manno-octulosonate cytidylyltransferase, found in Rhodopseudomonas palustris (strain HaA2).